The chain runs to 354 residues: tRNA-specific 2-thiouridylase MnmA (354 aa).

ATP contacts are provided by residues 6–13 and L33; that span reads LLSGGVDS. Catalysis depends on C100, which acts as the Nucleophile. C100 and C195 are disulfide-bonded. G123 contacts ATP. The tract at residues 145–147 is interaction with tRNA; the sequence is KDQ. Residue C195 is the Cysteine persulfide intermediate of the active site.

The protein belongs to the MnmA/TRMU family.

The protein localises to the cytoplasm. The catalysed reaction is S-sulfanyl-L-cysteinyl-[protein] + uridine(34) in tRNA + AH2 + ATP = 2-thiouridine(34) in tRNA + L-cysteinyl-[protein] + A + AMP + diphosphate + H(+). Catalyzes the 2-thiolation of uridine at the wobble position (U34) of tRNA, leading to the formation of s(2)U34. The polypeptide is tRNA-specific 2-thiouridylase MnmA (Borrelia turicatae (strain 91E135)).